Here is a 420-residue protein sequence, read N- to C-terminus: Serine--tRNA ligase (420 aa).

229–231 (TAE) contacts L-serine. 260–262 (RAE) contacts ATP. Glutamate 283 is an L-serine binding site. ATP is bound at residue 347–350 (EISS). Serine 382 is an L-serine binding site.

It belongs to the class-II aminoacyl-tRNA synthetase family. Type-1 seryl-tRNA synthetase subfamily. In terms of assembly, homodimer. The tRNA molecule binds across the dimer.

It localises to the cytoplasm. The enzyme catalyses tRNA(Ser) + L-serine + ATP = L-seryl-tRNA(Ser) + AMP + diphosphate + H(+). It carries out the reaction tRNA(Sec) + L-serine + ATP = L-seryl-tRNA(Sec) + AMP + diphosphate + H(+). Its pathway is aminoacyl-tRNA biosynthesis; selenocysteinyl-tRNA(Sec) biosynthesis; L-seryl-tRNA(Sec) from L-serine and tRNA(Sec): step 1/1. Catalyzes the attachment of serine to tRNA(Ser). Is also able to aminoacylate tRNA(Sec) with serine, to form the misacylated tRNA L-seryl-tRNA(Sec), which will be further converted into selenocysteinyl-tRNA(Sec). This chain is Serine--tRNA ligase, found in Caldicellulosiruptor bescii (strain ATCC BAA-1888 / DSM 6725 / KCTC 15123 / Z-1320) (Anaerocellum thermophilum).